Consider the following 446-residue polypeptide: Iroquois-class homeodomain protein IRX-6 (446 aa).

Positions 146–208 (GAGRRKNATR…NARRRLKKEN (63 aa)) form a DNA-binding region, homeobox. Disordered stretches follow at residues 208–273 (NKMT…EDEE) and 362–394 (AVEGAPPARPRPRSPECRMIPGQPPASARRLSV). The segment covering 217 to 226 (KGGEERKAEG) has biased composition (basic and acidic residues). Positions 256-273 (LEDLEEEEEEEEEAEDEE) are enriched in acidic residues.

Belongs to the TALE/IRO homeobox family.

The protein localises to the nucleus. In terms of biological role, transcription factor. Binds to the iroquois binding site (IBS) motif of target genes to regulate gene expression; functions as a transcriptional activator or repressor. Modulates expression of RCVRN, VSX1, BHLHE22/BHLHB5 and TACR3/Nk3r. Required downstream of retinal bipolar cell specification for the terminal differentiation of type 2, type 3a and possibly type 6 bipolar cells. The chain is Iroquois-class homeodomain protein IRX-6 (IRX6) from Homo sapiens (Human).